The sequence spans 510 residues: Flagellin A (510 aa).

This sequence belongs to the bacterial flagellin family. As to quaternary structure, heteromer of FlaA and FlaB. FlaB is located proximal to the hook while the remainder of the filament is composed of the predominant FlaA.

The protein localises to the secreted. The protein resides in the bacterial flagellum. In terms of biological role, flagellin is the subunit protein which polymerizes to form the filaments of bacterial flagella. Important for motility and virulence. This is Flagellin A (flaA) from Helicobacter pylori (strain ATCC 700392 / 26695) (Campylobacter pylori).